A 338-amino-acid polypeptide reads, in one-letter code: Secretory carrier-associated membrane protein 1 (338 aa).

Positions 1–63 (MSDFDSNPFA…PNVPSTQPAI (63 aa)) are disordered. Ser-2 carries the N-acetylserine modification. At Ser-2 the chain carries Phosphoserine. Topologically, residues 2-155 (SDFDSNPFAD…QKTVKIMYYL (154 aa)) are cytoplasmic. Phosphothreonine is present on Thr-45. Residues 156-176 (WMFHAVTLFLNIFGCLAWFCV) traverse the membrane as a helical segment. The Lumenal portion of the chain corresponds to 177–181 (DPSRG). The chain crosses the membrane as a helical span at residues 182–202 (VDFGLSILWFLLFTPCSFVCW). The Cytoplasmic segment spans residues 203-217 (YRPLYGAFRSDSSFR). Residues 218–238 (FFVFFFVYICQFAVHVLQAAG) form a helical membrane-spanning segment. Residues 239 to 261 (FHNWGNCGWISSLTGLNQSIPVG) are Lumenal-facing. Residues 262–282 (IMMIIIAALFTASAVISLVMF) traverse the membrane as a helical segment. Over 283–338 (KKVHGLYRTTGASFEKAQQEFATGVMSNKTVQTAAANAASTAATSAAQNAFKGNQI) the chain is Cytoplasmic.

This sequence belongs to the SCAMP family. In terms of assembly, interacts with SYNRG, ITSN1 and SLC9A7.

It localises to the golgi apparatus. Its subcellular location is the trans-Golgi network membrane. It is found in the recycling endosome membrane. Its function is as follows. Functions in post-Golgi recycling pathways. Acts as a recycling carrier to the cell surface. This is Secretory carrier-associated membrane protein 1 (SCAMP1) from Sus scrofa (Pig).